A 216-amino-acid chain; its full sequence is Major fimbrial subunit (216 aa).

Positions 1–20 (MKKTLLGSLILLAFAGNVQA) are cleaved as a signal peptide. An intrachain disulfide couples Cys41 to Cys81.

This sequence belongs to the fimbrial protein family.

Its subcellular location is the fimbrium. Functionally, mediates adherence to oropharyngeal epithelial cells. Helps the airway colonization process. This is Major fimbrial subunit (hifA) from Haemophilus influenzae.